The primary structure comprises 511 residues: MAIPKAHYSLAVLVLLFVVVSSSQKVCNPECKAKEPFHCDNTHAFNRSGFPKNFTFGAATSAYQIEGAAHRALNGWDYFTHRYPEKVPDRSSADLACDSYDLYKDDVKLLKRMNVQAYRLSIAWSRVLPKGRLTGGVDENGITYYNNLINELKANGIEPYVTIFHWDVPQTLEDEYGGFLSTRIVEDYTNYAELLFQRFGDRVKFWITLNQPLSLALKGYGNGSYPPGRCTGCELGGDSGVEPYTVAHNQLLAHAKTVSLYRKRYQKFQGGKIGTTLIGRWFVPLNEFSELDKAAAKRAFDFFVGWFLDPLVYGKYPTIMREMVGDRLPEFTPEESALVKGSLDFLGLNYYVSQYATDAPPPTQPNAITDARVTLGFYRNGSPIGVVASSFVYYPPGFRQILNYIKDNYKNPLTYITENGVADLDLGNVTLATALADNGRIQNHCSHLSCLKCAMKDGCNVAGYFAWSLMDNYEFGNGYTLRFGMNWVNFTNPADRKEKASGKWFSKFLAK.

The N-terminal stretch at 1–23 is a signal peptide; that stretch reads MAIPKAHYSLAVLVLLFVVVSSS. Cystine bridges form between C31–C450, C39–C445, and C230–C233. N-linked (GlcNAc...) asparagine glycans are attached at residues N46 and N53. Residues Q64, H165, and 210–211 each bind a beta-D-glucoside; that span reads NQ. N-linked (GlcNAc...) asparagine glycosylation is present at N222. Positions 351 and 418 each coordinate a beta-D-glucoside. E418 serves as the catalytic Nucleophile. N428 is a glycosylation site (N-linked (GlcNAc...) asparagine). Residues W467, 474–475, and F483 each bind a beta-D-glucoside; that span reads EF. Residue N489 is glycosylated (N-linked (GlcNAc...) asparagine).

It belongs to the glycosyl hydrolase 1 family. In terms of tissue distribution, specifically expressed in roots.

The catalysed reaction is a thioglucoside + H2O = a sugar + a thiol.. It carries out the reaction Hydrolysis of terminal, non-reducing beta-D-glucosyl residues with release of beta-D-glucose.. Its function is as follows. Hydrolyzes sinigrin and, with lower efficiency, p-nitrophenyl beta-D-glucoside. The sequence is that of Myrosinase 5 from Arabidopsis thaliana (Mouse-ear cress).